The sequence spans 364 residues: Protein MGF 360-1L (364 aa).

Belongs to the asfivirus MGF 360 family.

Functionally, plays a role in virus cell tropism, and may be required for efficient virus replication in macrophages. The protein is Protein MGF 360-1L of Ornithodoros (relapsing fever ticks).